The chain runs to 137 residues: Large ribosomal subunit protein bL21 (137 aa).

The segment at 1–26 (MADTKTATPATDAEEATATPPAAAPS) is disordered.

Belongs to the bacterial ribosomal protein bL21 family. Part of the 50S ribosomal subunit. Contacts protein L20.

In terms of biological role, this protein binds to 23S rRNA in the presence of protein L20. The sequence is that of Large ribosomal subunit protein bL21 from Parasynechococcus marenigrum (strain WH8102).